The chain runs to 612 residues: Cytoplasmic dynein 1 intermediate chain 2 (612 aa).

Basic and acidic residues-rich tracts occupy residues 1-13 (MSDK…ELER) and 20-43 (QIRE…KKEA). 2 disordered regions span residues 1 to 117 (MSDK…MAKI) and 129 to 188 (TYTK…EEKQ). Ser2 carries the post-translational modification N-acetylserine. Residue Ser51 is modified to Diphosphoserine. Phosphoserine occurs at positions 51 and 84. Positions 82 to 91 (PSSKSVSTPS) are enriched in low complexity. A Phosphothreonine modification is found at Thr89. Residues Ser91, Ser95, and Ser98 each carry the phosphoserine modification. A compositionally biased stretch (basic and acidic residues) spans 164-188 (EKTLKKDEESDSKAPPHELTEEEKQ). 7 WD repeats span residues 251 to 300 (SKHR…TTPE), 304 to 344 (HCQS…RTPV), 353 to 394 (AHTH…HPQD), 403 to 443 (SKAV…AGIS), 448 to 493 (GHQG…PLYS), 496 to 536 (DNSD…EVPT), and 542 to 581 (EGNP…AVPR).

This sequence belongs to the dynein intermediate chain family. Homodimer. The cytoplasmic dynein 1 complex consists of two catalytic heavy chains (HCs) and a number of non-catalytic subunits presented by intermediate chains (ICs), light intermediate chains (LICs) and light chains (LCs); the composition seems to vary in respect to the IC, LIC and LC composition. The heavy chain homodimer serves as a scaffold for the probable homodimeric assembly of the respective non-catalytic subunits. The ICs and LICs bind directly to the HC dimer and the LCs assemble on the IC dimer. Interacts with DYNLT3. Interacts with DYNLT1. Interacts (dephosphorylated at Ser-84) with DCTN1. Interacts with BICD2. Interacts with SPEF2. Interacts with CFAP61. Post-translationally, the phosphorylation status of Ser-84 appears to be involved in dynactin-dependent target binding. In terms of processing, pyrophosphorylation by 5-diphosphoinositol pentakisphosphate (5-IP7) promotes interaction with DCTN1. Serine pyrophosphorylation is achieved by Mg(2+)-dependent, but enzyme independent transfer of a beta-phosphate from a inositol pyrophosphate to a pre-phosphorylated serine residue.

Its subcellular location is the cytoplasm. The protein resides in the cytoskeleton. Its function is as follows. Acts as one of several non-catalytic accessory components of the cytoplasmic dynein 1 complex that are thought to be involved in linking dynein to cargos and to adapter proteins that regulate dynein function. Cytoplasmic dynein 1 acts as a motor for the intracellular retrograde motility of vesicles and organelles along microtubules. The intermediate chains mediate the binding of dynein to dynactin via its 150 kDa component (p150-glued) DCTN1. Involved in membrane-transport, such as Golgi apparatus, late endosomes and lysosomes. In Bos taurus (Bovine), this protein is Cytoplasmic dynein 1 intermediate chain 2 (DYNC1I2).